The sequence spans 551 residues: MNRRRFIKASLALAAACGTPGLATLFSRNAWAQESDIADGQTRAFDFSVLQAMASELAQKPWGGAPRPLPDTLAKLTPQAYNSIQYDAGHSLWNNIEGRQLDVQFFHVGMGFRRRVRMFSLDPATRQAREVHFRPELFNYHDAGVDTRQLEGQTDLGFAGFRAFKAPELARRDIVSFLGASYFRAVDSTFQYGLSARGLAVDTFTDTPEEFPDFTAFWFETPKAQDTTFVAYALLDSPSVTGAYKFIIHCESSQVIMEVENFLFARKDIKQLGIAPMTSMFSCGTNERRMCDTIHPQIHDSDRLAMWRGNGEWVCRPLNNPQRLQFNAFSDENPKGFGLLQTDHKFESYQDVMGWYNKRPSLWVEPRNRWGKGTVALMEIPTTGETLDNIVCFWQPEKPIRAGDKLNFQYRLYWSGDAPVRTPLARVYATRTGMGSFPEGWAPGENFPTQWSRRVAVDFVGGDLKGAAPRGIEPVITLSSGEAKQVEILYVEPFDGYRIQFDWYPTSDSVDPVEMRMFLRCQGEAISETWLWQYFPPAPDKRKYVDDRQMR.

A signal peptide (tat-type signal) is located at residues 1–32 (MNRRRFIKASLALAAACGTPGLATLFSRNAWA).

The protein belongs to the OpgD/OpgG family. In terms of processing, predicted to be exported by the Tat system. The position of the signal peptide cleavage has not been experimentally proven.

Its subcellular location is the periplasm. The protein operates within glycan metabolism; osmoregulated periplasmic glucan (OPG) biosynthesis. Functionally, probably involved in the control of the structural glucose backbone of osmoregulated periplasmic glucans (OPGs). This chain is Glucans biosynthesis protein D, found in Cronobacter sakazakii (strain ATCC BAA-894) (Enterobacter sakazakii).